We begin with the raw amino-acid sequence, 652 residues long: MERPGPSDGSDASGPDPQLAVTMGFTGFGKKARTFDLEAMFEQTRRTAVERSRKTLEAREREEEMNREKELRRQNEDLEPTSSGSNVARACSKSSSRDTSSSESDESSDSSDDELIGPPLPLKMVEEPVNPMEEGVLGPLPPPLAEDVEEEDDDDGDSEEEENPVRKIPDSHEITIKHGTKTVSALGLDPSGARLVTGGYDYDVKFWDFAGMDASFKAFRSLQPCECHQIKSLQYSNTGDMILVVSGSSQAKVIDRDGFEVMECIKGDQYIVDMANTKGHTAMLHTGSWHPKIKGEFMTCSNDATVRTWEVENPKKQKSVFKPRTMQGKKVIPTTCTYSRDGSLIAAACQNGSIQIWDRNLTVHPKFHYKQAHDPGTDTSCVTFSYDGTVLASRGGDDTLKLWDIRQFNKPLFSASGLPTMFPMTDCCFSPDDKLIVTGTSVQRGCGSGKLVFFERRTFQRVYEIDITDASVVRCLWHPKLNQIMVGTGNGLAKVYYDPNKSQRGAKLCVVKTQRKAKQAETLTQDYIITPHALPMFREPRQRSTRKQLEKDRLDPLKSHKPEPPVAGPGRGGRVGTHGGTLSSYIVKNIALDKTDDSNPREAILRHAKAAEDNPYWVSPAYSKTQPKTMFAQVESDDEETKNEPEWKKRKI.

Disordered regions lie at residues 1 to 22 and 45 to 171; these read MERPGPSDGSDASGPDPQLAVT and RRTA…IPDS. Residues 45 to 76 are compositionally biased toward basic and acidic residues; that stretch reads RRTAVERSRKTLEAREREEEMNREKELRRQNE. Residues 92 to 102 are compositionally biased toward low complexity; sequence SKSSSRDTSSS. Acidic residues-rich tracts occupy residues 103 to 115 and 146 to 162; these read ESDESSDSSDDEL and EDVEEEDDDDGDSEEEE. 7 WD repeats span residues 178-217, 225-266, 279-319, 328-367, 374-413, 419-464, and 467-506; these read HGTKTVSALGLDPSGARLVTGGYDYDVKFWDFAGMDASFK, CECH…ECIK, GHTA…KQKS, GKKVIPTTCTYSRDGSLIAAACQNGSIQIWDRNLTVHPKF, DPGTDTSCVTFSYDGTVLASRGGDDTLKLWDIRQFNKPLF, PTMF…RVYE, and ITDASVVRCLWHPKLNQIMVGTGNGLAKVYYDPNKSQRGA. Lys-294 is covalently cross-linked (Glycyl lysine isopeptide (Lys-Gly) (interchain with G-Cter in SUMO2)). Position 450 is an N6-acetyllysine (Lys-450). Positions 538 to 563 are enriched in basic and acidic residues; sequence REPRQRSTRKQLEKDRLDPLKSHKPE. The interval 538 to 577 is disordered; it reads REPRQRSTRKQLEKDRLDPLKSHKPEPPVAGPGRGGRVGT. The residue at position 577 (Thr-577) is a Phosphothreonine. Residues Lys-588 and Lys-594 each participate in a glycyl lysine isopeptide (Lys-Gly) (interchain with G-Cter in SUMO2) cross-link. Residues Ser-619 and Ser-636 each carry the phosphoserine modification. The segment at 629-652 is disordered; that stretch reads TMFAQVESDDEETKNEPEWKKRKI. Over residues 642–652 the composition is skewed to basic and acidic residues; it reads KNEPEWKKRKI.

It belongs to the WD repeat GAD-1 family.

In Bos taurus (Bovine), this protein is WD repeat-containing protein 70 (WDR70).